We begin with the raw amino-acid sequence, 271 residues long: MGSLFPLSLLFFLAAAYPGVGSALGRRTKRAQSPKGSPLAPSGTSVPFWVRMSPEFVAVQPGKSVQLNCSNSCPQPQNSSLRTPLRQGKTLRGPGWVSYQLLDVRAWSSLAHCLVTCAGKTRWATSRITAYKPPHSVILEPPVLKGRKYTLRCHVTQVFPVGYLVVTLRHGSRVIYSESLERFTGLDLANVTLTYEFAAGPRDFWQPVICHARLNLDGLVVRNSSAPITLMLAWSPAPTALASGSIAALVGILLTVGAAYLCKCLAMKSQA.

An N-terminal signal peptide occupies residues 1 to 22 (MGSLFPLSLLFFLAAAYPGVGS). Residues 23–240 (ALGRRTKRAQ…MLAWSPAPTA (218 aa)) lie on the Extracellular side of the membrane. 2 Ig-like C2-type domains span residues 62 to 124 (GKSV…TRWA) and 146 to 217 (GRKY…LNLD). Residues Asn-68, Asn-78, Asn-190, and Asn-223 are each glycosylated (N-linked (GlcNAc...) asparagine). Disulfide bonds link Cys-69/Cys-113, Cys-69/Cys-117, Cys-73/Cys-117, and Cys-153/Cys-210. A helical membrane pass occupies residues 241 to 261 (LASGSIAALVGILLTVGAAYL). Residues 262–271 (CKCLAMKSQA) are Cytoplasmic-facing.

This sequence belongs to the immunoglobulin superfamily. ICAM family. In terms of processing, N- and O-glycosylated. In terms of tissue distribution, erythrocytes.

The protein resides in the cell membrane. It localises to the secreted. ICAM proteins are ligands for the leukocyte adhesion protein LFA-1 (integrin alpha-L/beta-2). ICAM4 is also a ligand for alpha-4/beta-1 and alpha-V integrins. The sequence is that of Intercellular adhesion molecule 4 (ICAM4) from Homo sapiens (Human).